The following is a 477-amino-acid chain: Acetolactate synthase small subunit 2, chloroplastic (477 aa).

Residues 1 to 53 constitute a chloroplast transit peptide; it reads MAATTTATSLFSSRLHFQNQNQGYGFPAKTPNSLQVNQIIDGRKMRNATVLSA. 2 ACT domains span residues 78 to 150 and 309 to 383; these read TISV…DLSK and TLSL…NITH. L-valine contacts are provided by Asp85, Ile89, Ile90, Asn103, Ile104, Asn316, Val320, Leu321, Asn334, and Ile335.

It belongs to the acetolactate synthase small subunit family. As to quaternary structure, the acetolactate synthase complex contains 4 homodimers of the large catalytic subunits, and 1 homotetramer of the small regulatory subunits. Expressed in roots in the vascular tissuem in cells around the quiescent center, in floral organs at the tips of young siliques and in the joint region between the silique and the pedicel. Barely detectable in mature leaves or siliques.

It is found in the plastid. The protein resides in the chloroplast. The protein localises to the peroxisome. It participates in amino-acid biosynthesis; L-isoleucine biosynthesis; L-isoleucine from 2-oxobutanoate: step 1/4. It functions in the pathway amino-acid biosynthesis; L-valine biosynthesis; L-valine from pyruvate: step 1/4. Functionally, regulatory subunit of acetohydroxy-acid synthase. Involved in the feed-back inhibition by branched-chain amino acids but not in herbicide tolerance. May play a role in valine and isoleucine-mediated feedback inhibition in roots. In vitro, inhibited by valine, but not leucine or isoleucine. Required for reproductive development and sodium homeostasis. In Arabidopsis thaliana (Mouse-ear cress), this protein is Acetolactate synthase small subunit 2, chloroplastic.